The chain runs to 145 residues: 3-hydroxyacyl-[acyl-carrier-protein] dehydratase FabZ (145 aa).

His52 is a catalytic residue.

This sequence belongs to the thioester dehydratase family. FabZ subfamily.

Its subcellular location is the cytoplasm. The catalysed reaction is a (3R)-hydroxyacyl-[ACP] = a (2E)-enoyl-[ACP] + H2O. Functionally, involved in unsaturated fatty acids biosynthesis. Catalyzes the dehydration of short chain beta-hydroxyacyl-ACPs and long chain saturated and unsaturated beta-hydroxyacyl-ACPs. The polypeptide is 3-hydroxyacyl-[acyl-carrier-protein] dehydratase FabZ (Deinococcus radiodurans (strain ATCC 13939 / DSM 20539 / JCM 16871 / CCUG 27074 / LMG 4051 / NBRC 15346 / NCIMB 9279 / VKM B-1422 / R1)).